Consider the following 210-residue polypeptide: Small ribosomal subunit protein uS4 (210 aa).

The segment at 30-49 (EKSSLEKRKYPPGLPPKKKG) is disordered. Positions 99–162 (RRLDNVLYRM…QKSAFIEENI (64 aa)) constitute an S4 RNA-binding domain.

This sequence belongs to the universal ribosomal protein uS4 family. As to quaternary structure, part of the 30S ribosomal subunit. Contacts protein S5. The interaction surface between S4 and S5 is involved in control of translational fidelity.

One of the primary rRNA binding proteins, it binds directly to 16S rRNA where it nucleates assembly of the body of the 30S subunit. Its function is as follows. With S5 and S12 plays an important role in translational accuracy. The chain is Small ribosomal subunit protein uS4 from Leptospira biflexa serovar Patoc (strain Patoc 1 / Ames).